A 207-amino-acid polypeptide reads, in one-letter code: ATP phosphoribosyltransferase (207 aa).

It belongs to the ATP phosphoribosyltransferase family. Short subfamily. As to quaternary structure, heteromultimer composed of HisG and HisZ subunits.

Its subcellular location is the cytoplasm. The enzyme catalyses 1-(5-phospho-beta-D-ribosyl)-ATP + diphosphate = 5-phospho-alpha-D-ribose 1-diphosphate + ATP. Its pathway is amino-acid biosynthesis; L-histidine biosynthesis; L-histidine from 5-phospho-alpha-D-ribose 1-diphosphate: step 1/9. Functionally, catalyzes the condensation of ATP and 5-phosphoribose 1-diphosphate to form N'-(5'-phosphoribosyl)-ATP (PR-ATP). Has a crucial role in the pathway because the rate of histidine biosynthesis seems to be controlled primarily by regulation of HisG enzymatic activity. This chain is ATP phosphoribosyltransferase (hisG), found in Dictyoglomus turgidum (strain DSM 6724 / Z-1310).